Consider the following 297-residue polypeptide: tRNA dimethylallyltransferase (297 aa).

15 to 22 is an ATP binding site; the sequence is GPTASGKS. 17-22 provides a ligand contact to substrate; that stretch reads TASGKS. Interaction with substrate tRNA stretches follow at residues 40–43 and 164–168; these read DSMQ and QRIVR.

The protein belongs to the IPP transferase family. In terms of assembly, monomer. Requires Mg(2+) as cofactor.

It catalyses the reaction adenosine(37) in tRNA + dimethylallyl diphosphate = N(6)-dimethylallyladenosine(37) in tRNA + diphosphate. Catalyzes the transfer of a dimethylallyl group onto the adenine at position 37 in tRNAs that read codons beginning with uridine, leading to the formation of N6-(dimethylallyl)adenosine (i(6)A). The polypeptide is tRNA dimethylallyltransferase (Rhizobium leguminosarum bv. trifolii (strain WSM2304)).